We begin with the raw amino-acid sequence, 312 residues long: Bifunctional pinoresinol-lariciresinol reductase 2 (312 aa).

Residues 11-17 (GGTGYIG), Arg-36, and Lys-45 contribute to the NADP(+) site. The active-site Proton acceptor is the Lys-138. Residue Arg-142 participates in NADP(+) binding. A substrate-binding site is contributed by His-270.

This sequence belongs to the NmrA-type oxidoreductase family. Isoflavone reductase subfamily. In terms of assembly, dimer.

It catalyses the reaction (+)-lariciresinol + NADP(+) = (+)-pinoresinol + NADPH + H(+). The enzyme catalyses (-)-secoisolariciresinol + NADP(+) = (+)-lariciresinol + NADPH + H(+). It carries out the reaction (-)-lariciresinol + NADP(+) = (-)-pinoresinol + NADPH + H(+). Reductase involved in lignan biosynthesis. Catalyzes the enantioselective sequential conversion of (+)-pinoresinol into (+)-lariciresinol and of (+)-lariciresinol into (-)-secoisolariciresinol. Can also convert with a lower efficiency (-)-pinoresinol into (-)-lariciresinol, but not (-)-lariciresinol into (+)-secoisolariciresinol. Abstracts the 4R-hydride from the NADPH cofactor during catalysis. This chain is Bifunctional pinoresinol-lariciresinol reductase 2 (PLR_Tp2), found in Thuja plicata (Western red-cedar).